We begin with the raw amino-acid sequence, 143 residues long: Succinate dehydrogenase assembly factor 2, mitochondrial (143 aa).

It belongs to the SDHAF2 family. As to quaternary structure, interacts with the flavoprotein subunit within the SDH catalytic dimer.

The protein resides in the mitochondrion matrix. In terms of biological role, plays an essential role in the assembly of succinate dehydrogenase (SDH), an enzyme complex (also referred to as respiratory complex II) that is a component of both the tricarboxylic acid (TCA) cycle and the mitochondrial electron transport chain, and which couples the oxidation of succinate to fumarate with the reduction of ubiquinone (coenzyme Q) to ubiquinol. Required for flavinylation (covalent attachment of FAD) of the flavoprotein subunit of the SDH catalytic dimer. The polypeptide is Succinate dehydrogenase assembly factor 2, mitochondrial (Schizosaccharomyces japonicus (strain yFS275 / FY16936) (Fission yeast)).